The primary structure comprises 406 residues: 2,3-bisphosphoglycerate-independent phosphoglycerate mutase (406 aa).

The protein belongs to the BPG-independent phosphoglycerate mutase family. A-PGAM subfamily.

It catalyses the reaction (2R)-2-phosphoglycerate = (2R)-3-phosphoglycerate. It functions in the pathway carbohydrate degradation; glycolysis; pyruvate from D-glyceraldehyde 3-phosphate: step 3/5. In terms of biological role, catalyzes the interconversion of 2-phosphoglycerate and 3-phosphoglycerate. The protein is 2,3-bisphosphoglycerate-independent phosphoglycerate mutase of Methanococcus maripaludis (strain C6 / ATCC BAA-1332).